A 278-amino-acid polypeptide reads, in one-letter code: Shikimate dehydrogenase (NADP(+)) (278 aa).

Shikimate is bound by residues 18-20 (SRS) and Thr65. Lys69 serves as the catalytic Proton acceptor. Glu80 contributes to the NADP(+) binding site. 2 residues coordinate shikimate: Asn89 and Asp104. Residues 129-133 (GAGGS) and Leu218 each bind NADP(+). Position 220 (Tyr220) interacts with shikimate. Gly241 is an NADP(+) binding site.

Belongs to the shikimate dehydrogenase family. Homodimer.

It catalyses the reaction shikimate + NADP(+) = 3-dehydroshikimate + NADPH + H(+). It functions in the pathway metabolic intermediate biosynthesis; chorismate biosynthesis; chorismate from D-erythrose 4-phosphate and phosphoenolpyruvate: step 4/7. Its function is as follows. Involved in the biosynthesis of the chorismate, which leads to the biosynthesis of aromatic amino acids. Catalyzes the reversible NADPH linked reduction of 3-dehydroshikimate (DHSA) to yield shikimate (SA). This chain is Shikimate dehydrogenase (NADP(+)), found in Rhodopseudomonas palustris (strain TIE-1).